We begin with the raw amino-acid sequence, 322 residues long: CRISPR-associated protein Cas1 1 (322 aa).

The Mn(2+) site is built by E149, H214, and E229.

It belongs to the CRISPR-associated endonuclease Cas1 family. As to quaternary structure, homodimer, forms a heterotetramer with a Cas2 homodimer. Mg(2+) is required as a cofactor. It depends on Mn(2+) as a cofactor.

Functionally, CRISPR (clustered regularly interspaced short palindromic repeat), is an adaptive immune system that provides protection against mobile genetic elements (viruses, transposable elements and conjugative plasmids). CRISPR clusters contain spacers, sequences complementary to antecedent mobile elements, and target invading nucleic acids. CRISPR clusters are transcribed and processed into CRISPR RNA (crRNA). Acts as a dsDNA endonuclease. Involved in the integration of spacer DNA into the CRISPR cassette. The chain is CRISPR-associated protein Cas1 1 from Methanobrevibacter ruminantium (strain ATCC 35063 / DSM 1093 / JCM 13430 / OCM 146 / M1) (Methanobacterium ruminantium).